We begin with the raw amino-acid sequence, 78 residues long: Large ribosomal subunit protein bL28 (78 aa).

Residues 1–22 (MSRVCQVTGKRPMSGNNRSHAM) are disordered.

It belongs to the bacterial ribosomal protein bL28 family.

This Yersinia pseudotuberculosis serotype O:1b (strain IP 31758) protein is Large ribosomal subunit protein bL28.